We begin with the raw amino-acid sequence, 431 residues long: Enolase (431 aa).

Residue Q167 coordinates (2R)-2-phosphoglycerate. The active-site Proton donor is the E209. Mg(2+) is bound by residues D246, E289, and D316. The (2R)-2-phosphoglycerate site is built by K341, R370, S371, and K392. The active-site Proton acceptor is the K341.

Belongs to the enolase family. In terms of assembly, component of the RNA degradosome, a multiprotein complex involved in RNA processing and mRNA degradation. It depends on Mg(2+) as a cofactor.

Its subcellular location is the cytoplasm. It is found in the secreted. The protein resides in the cell surface. The enzyme catalyses (2R)-2-phosphoglycerate = phosphoenolpyruvate + H2O. It participates in carbohydrate degradation; glycolysis; pyruvate from D-glyceraldehyde 3-phosphate: step 4/5. In terms of biological role, catalyzes the reversible conversion of 2-phosphoglycerate (2-PG) into phosphoenolpyruvate (PEP). It is essential for the degradation of carbohydrates via glycolysis. The polypeptide is Enolase (Shewanella pealeana (strain ATCC 700345 / ANG-SQ1)).